The sequence spans 779 residues: Phosphoribosylformylglycinamidine synthase subunit PurL (779 aa).

His52 is an active-site residue. Tyr55 and Lys94 together coordinate ATP. Glu96 serves as a coordination point for Mg(2+). Substrate contacts are provided by residues 97-100 (SHNH) and Arg119. His98 serves as the catalytic Proton acceptor. Asp120 serves as a coordination point for Mg(2+). Substrate is bound at residue Gln243. Asp271 provides a ligand contact to Mg(2+). 315–317 (ESQ) contacts substrate. Residues Asn523 and Gly560 each coordinate ATP. Mg(2+) is bound at residue Asn561. Ser563 provides a ligand contact to substrate.

This sequence belongs to the FGAMS family. In terms of assembly, monomer. Part of the FGAM synthase complex composed of 1 PurL, 1 PurQ and 2 PurS subunits.

It is found in the cytoplasm. The enzyme catalyses N(2)-formyl-N(1)-(5-phospho-beta-D-ribosyl)glycinamide + L-glutamine + ATP + H2O = 2-formamido-N(1)-(5-O-phospho-beta-D-ribosyl)acetamidine + L-glutamate + ADP + phosphate + H(+). It functions in the pathway purine metabolism; IMP biosynthesis via de novo pathway; 5-amino-1-(5-phospho-D-ribosyl)imidazole from N(2)-formyl-N(1)-(5-phospho-D-ribosyl)glycinamide: step 1/2. Its function is as follows. Part of the phosphoribosylformylglycinamidine synthase complex involved in the purines biosynthetic pathway. Catalyzes the ATP-dependent conversion of formylglycinamide ribonucleotide (FGAR) and glutamine to yield formylglycinamidine ribonucleotide (FGAM) and glutamate. The FGAM synthase complex is composed of three subunits. PurQ produces an ammonia molecule by converting glutamine to glutamate. PurL transfers the ammonia molecule to FGAR to form FGAM in an ATP-dependent manner. PurS interacts with PurQ and PurL and is thought to assist in the transfer of the ammonia molecule from PurQ to PurL. This is Phosphoribosylformylglycinamidine synthase subunit PurL from Prochlorococcus marinus (strain MIT 9215).